The sequence spans 412 residues: Aurora kinase (412 aa).

Positions 94-119 are disordered; it reads NEKVRPSKSSHIPVKSPIRKKGHSPA. Residues 148–401 form the Protein kinase domain; sequence FEIGKVLGKG…LAEVMNHPWI (254 aa). ATP-binding positions include 154 to 162 and Lys177; that span reads LGKGKLGKV. The active-site Proton acceptor is Asp271.

Belongs to the protein kinase superfamily. Ser/Thr protein kinase family. Aurora subfamily.

It is found in the nucleus. The protein localises to the cytoplasm. The protein resides in the cytoskeleton. Its subcellular location is the spindle. It localises to the chromosome. It is found in the centromere. The protein localises to the kinetochore. The enzyme catalyses L-seryl-[protein] + ATP = O-phospho-L-seryl-[protein] + ADP + H(+). It catalyses the reaction L-threonyl-[protein] + ATP = O-phospho-L-threonyl-[protein] + ADP + H(+). Its function is as follows. Component of the chromosomal passenger complex (CPC), a complex that acts as a key regulator of chromosome segregation and cytokinesis. Has a role in error-correction of aberrent kinetochore-microtubule attachments to ensure that sister kinetochores become bioriented and connect to opposite poles by promoting spindle assembly checkpoint signaling. In Debaryomyces hansenii (strain ATCC 36239 / CBS 767 / BCRC 21394 / JCM 1990 / NBRC 0083 / IGC 2968) (Yeast), this protein is Aurora kinase (IPL1).